Consider the following 336-residue polypeptide: tRNA (guanine(10)-N2)-dimethyltransferase (336 aa).

One can recognise a THUMP domain in the interval 50-147; the sequence is KILKKRLAYA…NDRFILTRRL (98 aa).

Belongs to the methyltransferase superfamily. Trm-G10 family. As to quaternary structure, monomer.

It is found in the cytoplasm. The catalysed reaction is guanosine(10) in tRNA + 2 S-adenosyl-L-methionine = N(2)-dimethylguanosine(10) in tRNA + 2 S-adenosyl-L-homocysteine + 2 H(+). Its function is as follows. Catalyzes the adenosylmethionine-dependent methylation of the exocyclic amino group (N(2)) of guanosine at position 10 of various tRNAs. Acts via a two-step process that leads to the formation of either N(2)-monomethyl (m(2)G) or N(2)-dimethylguanosine (m(2)(2)G). The sequence is that of tRNA (guanine(10)-N2)-dimethyltransferase (trmG10) from Methanothermobacter thermautotrophicus (strain ATCC 29096 / DSM 1053 / JCM 10044 / NBRC 100330 / Delta H) (Methanobacterium thermoautotrophicum).